We begin with the raw amino-acid sequence, 233 residues long: Large ribosomal subunit protein uL1 (233 aa).

It belongs to the universal ribosomal protein uL1 family. As to quaternary structure, part of the 50S ribosomal subunit.

Functionally, binds directly to 23S rRNA. The L1 stalk is quite mobile in the ribosome, and is involved in E site tRNA release. Protein L1 is also a translational repressor protein, it controls the translation of the L11 operon by binding to its mRNA. The chain is Large ribosomal subunit protein uL1 from Shewanella pealeana (strain ATCC 700345 / ANG-SQ1).